The following is a 188-amino-acid chain: Hypoxanthine/guanine phosphoribosyltransferase (188 aa).

The protein belongs to the purine/pyrimidine phosphoribosyltransferase family. Archaeal HPRT subfamily. In terms of assembly, homodimer.

Its subcellular location is the cytoplasm. The catalysed reaction is IMP + diphosphate = hypoxanthine + 5-phospho-alpha-D-ribose 1-diphosphate. It carries out the reaction GMP + diphosphate = guanine + 5-phospho-alpha-D-ribose 1-diphosphate. The protein operates within purine metabolism; IMP biosynthesis via salvage pathway; IMP from hypoxanthine: step 1/1. Its function is as follows. Catalyzes a salvage reaction resulting in the formation of IMP that is energically less costly than de novo synthesis. This is Hypoxanthine/guanine phosphoribosyltransferase from Methanobrevibacter ruminantium (strain ATCC 35063 / DSM 1093 / JCM 13430 / OCM 146 / M1) (Methanobacterium ruminantium).